Here is a 727-residue protein sequence, read N- to C-terminus: NADH-ubiquinone oxidoreductase 75 kDa subunit, mitochondrial (727 aa).

Residues 1-23 (MLRIPVRKALVVLSKSPKGCVRT) constitute a mitochondrion transit peptide. Residues 30–108 (NLIEVFVDGQ…GWNILTNSKK (79 aa)) enclose the 2Fe-2S ferredoxin-type domain. Positions 64, 75, and 78 each coordinate [2Fe-2S] cluster. N6-acetyllysine is present on lysine 84. Cysteine 92 lines the [2Fe-2S] cluster pocket. The 4Fe-4S His(Cys)3-ligated-type domain occupies 108–147 (KSKKAREGVMEFLLANHPLDCPICDQGGECDLQDQSMMFG). Positions 124, 128, 131, 137, 176, 179, 182, and 226 each coordinate [4Fe-4S] cluster. One can recognise a 4Fe-4S Mo/W bis-MGD-type domain in the interval 245–301 (TRKTESIDVMDAVGSNIVVSTRTGEVMRILPRMHEDINEEWISDKTRFAYDGLKRQR). 3 positions are modified to N6-acetyllysine: lysine 467, lysine 499, and lysine 709.

It belongs to the complex I 75 kDa subunit family. In terms of assembly, core subunit of respiratory chain NADH dehydrogenase (Complex I) which is composed of 45 different subunits. This is the largest subunit of complex I and it is a component of the iron-sulfur (IP) fragment of the enzyme. Complex I associates with ubiquinol-cytochrome reductase complex (Complex III) to form supercomplexes. Interacts with MDM2 and AKAP1. [2Fe-2S] cluster is required as a cofactor. Requires [4Fe-4S] cluster as cofactor.

The protein resides in the mitochondrion inner membrane. It carries out the reaction a ubiquinone + NADH + 5 H(+)(in) = a ubiquinol + NAD(+) + 4 H(+)(out). Its function is as follows. Core subunit of the mitochondrial membrane respiratory chain NADH dehydrogenase (Complex I) which catalyzes electron transfer from NADH through the respiratory chain, using ubiquinone as an electron acceptor. Essential for catalysing the entry and efficient transfer of electrons within complex I. Plays a key role in the assembly and stability of complex I and participates in the association of complex I with ubiquinol-cytochrome reductase complex (Complex III) to form supercomplexes. The sequence is that of NADH-ubiquinone oxidoreductase 75 kDa subunit, mitochondrial (NDUFS1) from Pan troglodytes (Chimpanzee).